Reading from the N-terminus, the 504-residue chain is Maturase K (504 aa).

This sequence belongs to the intron maturase 2 family. MatK subfamily.

The protein localises to the plastid. It localises to the chloroplast. Functionally, usually encoded in the trnK tRNA gene intron. Probably assists in splicing its own and other chloroplast group II introns. The polypeptide is Maturase K (Hamamelis virginiana (Witch-hazel)).